Here is a 306-residue protein sequence, read N- to C-terminus: Eukaryotic translation initiation factor 2 subunit alpha (306 aa).

In terms of domain architecture, S1 motif spans 17–88 (DELVVVNVRQ…EKGYIDLSKR (72 aa)). Ser-52 is subject to Phosphoserine. Thr-179 is subject to Phosphothreonine. Residues Ser-273, Ser-295, Ser-303, and Ser-305 each carry the phosphoserine modification.

This sequence belongs to the eIF-2-alpha family. Eukaryotic translation initiation factor 2 eIF2 is a heterotrimeric complex composed of an alpha, a beta and a gamma subunit.

It is found in the cytoplasm. The protein localises to the cytosol. Its function is as follows. eIF-2 functions in the early steps of protein synthesis by forming a ternary complex with GTP and initiator tRNA. This complex binds to a 40S ribosomal subunit, followed by mRNA binding to form a 43S pre-initiation complex. Junction of the 60S ribosomal subunit to form the 80S initiation complex is preceded by hydrolysis of the GTP bound to eIF-2 and release of an eIF-2-GDP binary complex. In order for eIF-2 to recycle and catalyze another round of initiation, the GDP bound to eIF-2 must exchange with GTP by way of a reaction catalyzed by eIF2B. The polypeptide is Eukaryotic translation initiation factor 2 subunit alpha (tif211) (Schizosaccharomyces pombe (strain 972 / ATCC 24843) (Fission yeast)).